Reading from the N-terminus, the 438-residue chain is Putative metabolite transport protein HI_0281 (438 aa).

Topologically, residues 1 to 17 (MSTQLRNNPMKVALASM) are cytoplasmic. The chain crosses the membrane as a helical span at residues 18-38 (VGTAIEFFDYYIYAAAAVLVF). The Periplasmic segment spans residues 39–52 (NTQFFHSDDPLSND). The chain crosses the membrane as a helical span at residues 53–73 (LLSLSTLALAFFARPIGSALF). Residues 74 to 85 (GHFGDKIGRKKT) lie on the Cytoplasmic side of the membrane. Residues 86 to 106 (LVASLVLMGGSTVVIGLLPNY) form a helical membrane-spanning segment. Residues 107-115 (AQIGIWAPI) lie on the Periplasmic side of the membrane. Residues 116–136 (LLCVCRVGQGIGLGGEWGGAA) form a helical membrane-spanning segment. Over 137 to 156 (LVATENAPEGKRAWYGTFPQ) the chain is Cytoplasmic. A helical membrane pass occupies residues 157–177 (LGAPIGLFVANGTFFLVSYLL). Residues 178 to 181 (GHNA) are Periplasmic-facing. The chain crosses the membrane as a helical span at residues 182 to 202 (LVEWAWRIPFVSSILLVAVGL). Over 203–239 (YVRLTLHESHVFVEAEQKGKKLNAPVSVVFTKHLKPM) the chain is Cytoplasmic. Residues 240-260 (VIGTFIMVATYSLFYIMTAFA) form a helical membrane-spanning segment. The Periplasmic segment spans residues 261-286 (QAYSRTAPKLSEAGYALGLGIPANTF). The helical transmembrane segment at 287–307 (TGLLLISAIVFGIFISISGFY) threads the bilayer. Topologically, residues 308–314 (ADKIGRR) are cytoplasmic. Residues 315–336 (KWLIWVTIAIGVLGLAMPLFLE) traverse the membrane as a helical segment. Over 337-342 (NGTPVS) the chain is Periplasmic. The helical transmembrane segment at 343-363 (VFAFLVIGMAIMGMTFGPMAA) threads the bilayer. Residues 364 to 377 (LLPELFPTEVRYSG) are Cytoplasmic-facing. A helical transmembrane segment spans residues 378–398 (ASLAYNLASIIGATIAAMISL). Residues 399–405 (KINASFG) are Periplasmic-facing. A helical membrane pass occupies residues 406 to 426 (VMGVGIYLAINALMTFLALLA). The Cytoplasmic portion of the chain corresponds to 427 to 438 (SKETKNVDLTEI).

It belongs to the major facilitator superfamily. Sugar transporter (TC 2.A.1.1) family.

The protein resides in the cell inner membrane. In Haemophilus influenzae (strain ATCC 51907 / DSM 11121 / KW20 / Rd), this protein is Putative metabolite transport protein HI_0281.